Reading from the N-terminus, the 93-residue chain is Co-chaperonin GroES 2 (93 aa).

The interval 1 to 20 is disordered; the sequence is MQPLGERIVVQREESETTTA.

Belongs to the GroES chaperonin family. Heptamer of 7 subunits arranged in a ring. Interacts with the chaperonin GroEL.

The protein resides in the cytoplasm. Functionally, together with the chaperonin GroEL, plays an essential role in assisting protein folding. The GroEL-GroES system forms a nano-cage that allows encapsulation of the non-native substrate proteins and provides a physical environment optimized to promote and accelerate protein folding. GroES binds to the apical surface of the GroEL ring, thereby capping the opening of the GroEL channel. The chain is Co-chaperonin GroES 2 from Rhodopirellula baltica (strain DSM 10527 / NCIMB 13988 / SH1).